Consider the following 211-residue polypeptide: Thymidylate kinase (211 aa).

7–14 contributes to the ATP binding site; the sequence is GIDGCGKT.

This sequence belongs to the thymidylate kinase family.

It catalyses the reaction dTMP + ATP = dTDP + ADP. Functionally, phosphorylation of dTMP to form dTDP in both de novo and salvage pathways of dTTP synthesis. This chain is Thymidylate kinase, found in Anaplasma marginale (strain Florida).